The following is a 230-amino-acid chain: Flagellar L-ring protein (230 aa).

Residues 1 to 15 (MSRLPSLSRPCLAIA) form the signal peptide. C16 carries N-palmitoyl cysteine lipidation. A lipid anchor (S-diacylglycerol cysteine) is attached at C16.

The protein belongs to the FlgH family. As to quaternary structure, the basal body constitutes a major portion of the flagellar organelle and consists of four rings (L,P,S, and M) mounted on a central rod.

Its subcellular location is the cell outer membrane. It is found in the bacterial flagellum basal body. In terms of biological role, assembles around the rod to form the L-ring and probably protects the motor/basal body from shearing forces during rotation. The polypeptide is Flagellar L-ring protein (Xanthomonas axonopodis pv. citri (strain 306)).